The following is a 361-amino-acid chain: Alcohol dehydrogenase 9 (361 aa).

Residues Cys51, Thr53, His73, Cys104, Cys107, Cys110, Cys118, and Cys167 each coordinate Zn(2+). Residues Thr53 and His73 each contribute to the an alcohol site. Thr53 contributes to the NAD(+) binding site. NAD(+)-binding positions include 192 to 197, Lys221, 278 to 280, and Lys356; these read GLGGLG and LGA.

The protein belongs to the zinc-containing alcohol dehydrogenase family. Class-III subfamily. In terms of assembly, homodimer. Zn(2+) serves as cofactor.

This Catharanthus roseus (Madagascar periwinkle) protein is Alcohol dehydrogenase 9.